We begin with the raw amino-acid sequence, 295 residues long: Pyridoxal 5'-phosphate synthase subunit PdxS (295 aa).

Asp-25 lines the D-ribose 5-phosphate pocket. Lys-82 acts as the Schiff-base intermediate with D-ribose 5-phosphate in catalysis. A D-ribose 5-phosphate-binding site is contributed by Gly-154. Residue Arg-166 participates in D-glyceraldehyde 3-phosphate binding. D-ribose 5-phosphate is bound by residues Gly-215 and 236–237; that span reads GS.

The protein belongs to the PdxS/SNZ family. As to quaternary structure, in the presence of PdxT, forms a dodecamer of heterodimers.

It catalyses the reaction aldehydo-D-ribose 5-phosphate + D-glyceraldehyde 3-phosphate + L-glutamine = pyridoxal 5'-phosphate + L-glutamate + phosphate + 3 H2O + H(+). It participates in cofactor biosynthesis; pyridoxal 5'-phosphate biosynthesis. Functionally, catalyzes the formation of pyridoxal 5'-phosphate from ribose 5-phosphate (RBP), glyceraldehyde 3-phosphate (G3P) and ammonia. The ammonia is provided by the PdxT subunit. Can also use ribulose 5-phosphate and dihydroxyacetone phosphate as substrates, resulting from enzyme-catalyzed isomerization of RBP and G3P, respectively. The polypeptide is Pyridoxal 5'-phosphate synthase subunit PdxS (Staphylococcus epidermidis (strain ATCC 35984 / DSM 28319 / BCRC 17069 / CCUG 31568 / BM 3577 / RP62A)).